A 267-amino-acid chain; its full sequence is Transcription factor HES-1-A (267 aa).

Residues methionine 1–glutamate 43 form a disordered region. Positions serine 10 to serine 22 are enriched in low complexity. Over residues aspartate 26–arginine 35 the composition is skewed to basic and acidic residues. The bHLH domain maps to histidine 34 to leucine 91. An Orange domain is found at tyrosine 110–leucine 143. Positions tryptophan 264–tryptophan 267 match the WRPW motif motif.

Transcription repression requires formation of a complex with a corepressor protein of the Groucho/TLE family. Interacts with the bHLH protein hes2, and binds DNA in the form of a heterodimer with the bHLH protein hey1/hrt1. Interacts with the bHLH protein hes6; this interaction may inhibit the transcriptional repressor activity. In terms of tissue distribution, starting from late neurula stage, weakly expressed in midline neural cells, where expression is restricted to the superficial layer of the prospective floorplate. Expressed in the posterior somitic mesoderm (PSM) at tailbud stage. During early tailbud stages, broadly expressed within the pronephric mesoderm both around and inside the developing pronephros. During late tailbud to early tadpole stages, expressed more ventrally in the pronephros, and although initially expressed in both the lateral and medial layers, by these later stages expression is predominantly in the lateral layer. Pronephric expression is no longer detectable in late tadpoles (stage 35).

It is found in the nucleus. Transcriptional repressor of a subset of early mesodermal genes including myod1 and t/bra. Binds DNA on N-box motifs: 5'-CACNAG-3'. Acts as a negative regulator of myogenesis, mediating Notch signaling to repress expression of myod1. This Xenopus laevis (African clawed frog) protein is Transcription factor HES-1-A (hes1-a).